The sequence spans 143 residues: Large ribosomal subunit protein uL16 (143 aa).

The disordered stretch occupies residues 1–26; that stretch reads MSMALLPRRVKYRKSQRGSRKGNATR. Residues 8-20 are compositionally biased toward basic residues; that stretch reads RRVKYRKSQRGSR.

This sequence belongs to the universal ribosomal protein uL16 family. As to quaternary structure, part of the 50S ribosomal subunit.

In terms of biological role, binds 23S rRNA and is also seen to make contacts with the A and possibly P site tRNAs. The sequence is that of Large ribosomal subunit protein uL16 from Methylacidiphilum infernorum (isolate V4) (Methylokorus infernorum (strain V4)).